The primary structure comprises 310 residues: Protein N-terminal asparagine amidohydrolase (310 aa).

As to quaternary structure, monomer.

It is found in the cytoplasm. The catalysed reaction is N-terminal L-asparaginyl-[protein] + H2O + H(+) = N-terminal L-aspartyl-[protein] + NH4(+). With respect to regulation, inhibited by micromolar concentrations of copper and zinc ions. Its function is as follows. N-terminal asparagine deamidase that mediates deamidation of N-terminal asparagine residues to aspartate. Required for the ubiquitin-dependent turnover of intracellular proteins that initiate with Met-Asn. These proteins are acetylated on the retained initiator methionine and can subsequently be modified by the removal of N-acetyl methionine by acylaminoacid hydrolase (AAH). Conversion of the resulting N-terminal asparagine to aspartate by NTAN1/PNAD renders the protein susceptible to arginylation, polyubiquitination and degradation as specified by the N-end rule. This enzyme does not act on substrates with internal or C-terminal asparagines and does not act on glutamine residues in any position, nor on acetylated N-terminal peptidyl Asn. The sequence is that of Protein N-terminal asparagine amidohydrolase (NTAN1) from Homo sapiens (Human).